A 449-amino-acid polypeptide reads, in one-letter code: UDP-N-acetylmuramoylalanine--D-glutamate ligase (449 aa).

Residue 111 to 117 (GTNGKST) participates in ATP binding.

This sequence belongs to the MurCDEF family.

Its subcellular location is the cytoplasm. The enzyme catalyses UDP-N-acetyl-alpha-D-muramoyl-L-alanine + D-glutamate + ATP = UDP-N-acetyl-alpha-D-muramoyl-L-alanyl-D-glutamate + ADP + phosphate + H(+). Its pathway is cell wall biogenesis; peptidoglycan biosynthesis. Its function is as follows. Cell wall formation. Catalyzes the addition of glutamate to the nucleotide precursor UDP-N-acetylmuramoyl-L-alanine (UMA). In Rickettsia felis (strain ATCC VR-1525 / URRWXCal2) (Rickettsia azadi), this protein is UDP-N-acetylmuramoylalanine--D-glutamate ligase.